The primary structure comprises 111 residues: Nucleoid-associated protein TTE0040 (111 aa).

It belongs to the YbaB/EbfC family. In terms of assembly, homodimer.

Its subcellular location is the cytoplasm. The protein resides in the nucleoid. Functionally, binds to DNA and alters its conformation. May be involved in regulation of gene expression, nucleoid organization and DNA protection. This Caldanaerobacter subterraneus subsp. tengcongensis (strain DSM 15242 / JCM 11007 / NBRC 100824 / MB4) (Thermoanaerobacter tengcongensis) protein is Nucleoid-associated protein TTE0040.